The sequence spans 267 residues: Phosphatidylglycerol--prolipoprotein diacylglyceryl transferase (267 aa).

The next 4 membrane-spanning stretches (helical) occupy residues 10–30 (VAIALGPFKVHWYGLMYVVGF), 54–74 (LLFYGALGVVLGGRVGYALFY), 90–110 (WDGGMSFHGGLIGVLIAAWLF), and 116–136 (LAFFQLTDFVAPLVPLGLGAG). R137 serves as a coordination point for a 1,2-diacyl-sn-glycero-3-phospho-(1'-sn-glycerol). Transmembrane regions (helical) follow at residues 169–189 (PSPLYEFALEGVVMFVVLWWV), 197–217 (GMISGLFLLLYAVFRFSVEFV), and 231–251 (WLTMGQLLTVPMALAGIALCV).

The protein belongs to the Lgt family.

The protein localises to the cell inner membrane. The catalysed reaction is L-cysteinyl-[prolipoprotein] + a 1,2-diacyl-sn-glycero-3-phospho-(1'-sn-glycerol) = an S-1,2-diacyl-sn-glyceryl-L-cysteinyl-[prolipoprotein] + sn-glycerol 1-phosphate + H(+). It participates in protein modification; lipoprotein biosynthesis (diacylglyceryl transfer). Functionally, catalyzes the transfer of the diacylglyceryl group from phosphatidylglycerol to the sulfhydryl group of the N-terminal cysteine of a prolipoprotein, the first step in the formation of mature lipoproteins. This chain is Phosphatidylglycerol--prolipoprotein diacylglyceryl transferase, found in Chromohalobacter salexigens (strain ATCC BAA-138 / DSM 3043 / CIP 106854 / NCIMB 13768 / 1H11).